The chain runs to 617 residues: Phosphatidylinositol-3,5-bisphosphate 3-phosphatase MTMR6 (617 aa).

A GRAM domain is found at 1-101; the sequence is MEHIRTTKVE…YNSLLQLSKQ (101 aa). Residues 2–141 form an interaction with RAB1B region; sequence EHIRTTKVEQ…AEYERMGVPN (140 aa). Y108 is modified (phosphotyrosine). One can recognise a Myotubularin phosphatase domain in the interval 124–499; sequence GWQLIDLAAE…FNFKFWRNMY (376 aa). A 1,2-diacyl-sn-glycero-3-phospho-(1D-myo-inositol-3,5-bisphosphate) is bound by residues N248, N273, and I274. A 1,2-diacyl-sn-glycero-3-phospho-(1D-myo-inositol-3-phosphate) is bound by residues N248, N273, and I274. C336 acts as the Phosphocysteine intermediate in catalysis. 8 residues coordinate a 1,2-diacyl-sn-glycero-3-phospho-(1D-myo-inositol-3,5-bisphosphate): S337, D338, G339, W340, D341, R342, K378, and R382. S337, D338, G339, W340, D341, and R342 together coordinate a 1,2-diacyl-sn-glycero-3-phospho-(1D-myo-inositol-3-phosphate). Residue R382 coordinates a 1,2-diacyl-sn-glycero-3-phospho-(1D-myo-inositol-3-phosphate). 3 positions are modified to phosphoserine: S557, S585, and S607.

This sequence belongs to the protein-tyrosine phosphatase family. Non-receptor class myotubularin subfamily. In terms of assembly, homodimer. Heterodimer (via C-terminus) with MTMR9 (via C-terminus). Interacts with ALKBH4. Interacts with KCNN4. Interacts (via GRAM domain) with RAB1B (in GDP-bound form); the interaction regulates MTMR6 recruitment to the endoplasmic reticulum-Golgi intermediate compartment. As to expression, isoform 1: Ubiquitously expressed including in heart, brain, spleen, lung, liver, muscle, kidney and testis (at protein level). Isoform 2: Expressed in testis (at protein level).

It localises to the cytoplasm. Its subcellular location is the endoplasmic reticulum-Golgi intermediate compartment. The protein resides in the cell projection. The protein localises to the ruffle membrane. It is found in the endoplasmic reticulum. It carries out the reaction a 1,2-diacyl-sn-glycero-3-phospho-(1D-myo-inositol-3,5-bisphosphate) + H2O = a 1,2-diacyl-sn-glycero-3-phospho-(1D-myo-inositol-5-phosphate) + phosphate. The catalysed reaction is a 1,2-diacyl-sn-glycero-3-phospho-(1D-myo-inositol-3-phosphate) + H2O = a 1,2-diacyl-sn-glycero-3-phospho-(1D-myo-inositol) + phosphate. The enzyme catalyses 1,2-dioctanoyl-sn-glycero-3-phospho-(1D-myo-inositol-3,5-bisphosphate) + H2O = 1,2-dioctanoyl-sn-glycero-3-phospho-(1D-myo-inositol-5-phosphate) + phosphate. It catalyses the reaction 1,2-dioctanoyl-sn-glycero-3-phospho-(1-D-myo-inositol-3-phosphate) + H2O = 1,2-dioctanoyl-sn-glycero-3-phospho-(1D-myo-inositol) + phosphate. With respect to regulation, allosterically activated by phosphatidylserine and/or phosphatidylinositol 4-phosphate (PtdIns(4)P), and phosphatidylinositol 5-phosphate (PtdIns(5)P). Interaction with MTMR9 increases catalytic activity towards phosphatidylinositol 3,5-bisphosphate. Its function is as follows. Lipid phosphatase that specifically dephosphorylates the D-3 position of phosphatidylinositol 3-phosphate and phosphatidylinositol 3,5-bisphosphate, generating phosphatidylinositol and phosphatidylinositol 5-phosphate. Binds with high affinity to phosphatidylinositol 3,5-bisphosphate (PtdIns(3,5)P2) but also to phosphatidylinositol 3-phosphate (PtdIns(3)P), phosphatidylinositol 4-phosphate (PtdIns(4)P), and phosphatidylinositol 5-phosphate (PtdIns(5)P), phosphatidic acid and phosphatidylserine. Negatively regulates ER-Golgi protein transport. Probably in association with MTMR9, plays a role in the late stages of macropinocytosis by dephosphorylating phosphatidylinositol 3-phosphate in membrane ruffles. Acts as a negative regulator of KCNN4/KCa3.1 channel activity in CD4(+) T-cells possibly by decreasing intracellular levels of phosphatidylinositol 3-phosphate. Negatively regulates proliferation of reactivated CD4(+) T-cells. In complex with MTMR9, negatively regulates DNA damage-induced apoptosis. The formation of the MTMR6-MTMR9 complex stabilizes both MTMR6 and MTMR9 protein levels. The protein is Phosphatidylinositol-3,5-bisphosphate 3-phosphatase MTMR6 of Mus musculus (Mouse).